We begin with the raw amino-acid sequence, 192 residues long: Ethylene-responsive transcription factor ERF027 (192 aa).

Residues 18 to 74 (VYRGIRCRSGKWVSEIREPRKTTRIWLGTYPMAEMAAAAYDVAAMALKGREAVLNFP) constitute a DNA-binding region (AP2/ERF). Disordered regions lie at residues 104 to 132 (CEEGEEEKKAKEKKSSSSKSRARECHVDN) and 167 to 192 (APPSWMGSRPSDDSPENSNDEDLWGY). The segment covering 179–192 (DSPENSNDEDLWGY) has biased composition (acidic residues).

The protein belongs to the AP2/ERF transcription factor family. ERF subfamily.

Its subcellular location is the nucleus. Functionally, probably acts as a transcriptional activator. Binds to the GCC-box pathogenesis-related promoter element. May be involved in the regulation of gene expression by stress factors and by components of stress signal transduction pathways. This is Ethylene-responsive transcription factor ERF027 (ERF027) from Arabidopsis thaliana (Mouse-ear cress).